The following is a 651-amino-acid chain: ATP-dependent zinc metalloprotease FtsH (651 aa).

The Extracellular segment spans residues 1 to 134; it reads MIVFATILFG…FTTDPQTAGP (134 aa). A helical transmembrane segment spans residues 135-155; the sequence is WARAIAVMAPFVLILLLFFLM. The Cytoplasmic segment spans residues 156 to 651; sequence TRTGRSASQS…PAMSVNGHRG (496 aa). 229–236 provides a ligand contact to ATP; sequence GPPGTGKT. His-451 serves as a coordination point for Zn(2+). The active site involves Glu-452. Residues His-455 and Asp-527 each coordinate Zn(2+).

This sequence in the central section; belongs to the AAA ATPase family. In the C-terminal section; belongs to the peptidase M41 family. Homohexamer. It depends on Zn(2+) as a cofactor.

It localises to the cell membrane. Acts as a processive, ATP-dependent zinc metallopeptidase for both cytoplasmic and membrane proteins. Plays a role in the quality control of integral membrane proteins. In Rubrobacter xylanophilus (strain DSM 9941 / JCM 11954 / NBRC 16129 / PRD-1), this protein is ATP-dependent zinc metalloprotease FtsH.